The primary structure comprises 531 residues: Bifunctional protein TrpGD (531 aa).

The region spanning 3–196 is the Glutamine amidotransferase type-1 domain; the sequence is DILLLDNIDS…LAWAQQKLEP (194 aa). 57 to 59 contributes to the L-glutamine binding site; sequence GPG. C84 functions as the Nucleophile; for GATase activity in the catalytic mechanism. L-glutamine contacts are provided by residues Q88 and 134 to 135; that span reads SL. Active-site for GATase activity residues include H170 and E172. The segment at 202 to 531 is anthranilate phosphoribosyltransferase; sequence PILEKLYQAQ…DRVTALAARG (330 aa).

In the C-terminal section; belongs to the anthranilate phosphoribosyltransferase family. As to quaternary structure, monomer. Heterotetramer consisting of two non-identical subunits: a beta subunit (TrpG) and a large alpha subunit (TrpE).

It carries out the reaction chorismate + L-glutamine = anthranilate + pyruvate + L-glutamate + H(+). It catalyses the reaction N-(5-phospho-beta-D-ribosyl)anthranilate + diphosphate = 5-phospho-alpha-D-ribose 1-diphosphate + anthranilate. It participates in amino-acid biosynthesis; L-tryptophan biosynthesis; L-tryptophan from chorismate: step 1/5. The protein operates within amino-acid biosynthesis; L-tryptophan biosynthesis; L-tryptophan from chorismate: step 2/5. Its activity is regulated as follows. Cooperatively feedback inhibited by tryptophan. Part of a heterotetrameric complex that catalyzes the two-step biosynthesis of anthranilate, an intermediate in the biosynthesis of L-tryptophan. In the first step, the glutamine-binding beta subunit (TrpG) of anthranilate synthase (AS) provides the glutamine amidotransferase activity which generates ammonia as a substrate that, along with chorismate, is used in the second step, catalyzed by the large alpha subunit of AS (TrpE) to produce anthranilate. In the absence of TrpG, TrpE can synthesize anthranilate directly from chorismate and high concentrations of ammonia. In addition to synthesizing anthranilate, it also catalyzes the second step of the pathway, the transfer of the phosphoribosyl group of 5-phosphorylribose-1-pyrophosphate (PRPP) to anthranilate. In Salmonella typhimurium (strain LT2 / SGSC1412 / ATCC 700720), this protein is Bifunctional protein TrpGD (trpGD).